We begin with the raw amino-acid sequence, 1077 residues long: MVPYFEMAAASNFSFLCGASHPQELVERAHALDLSGIGIADRNTLAGVVRAHAQWKDIRKESGFRLFIGCRLSFIDGTPDMVVYPRDRAAYGQLCRLLTEGKHRAAIKGECHLEWADLLFRARQFQIAVFPPDEDEPDFAARLTEIAQAAPGSVWLALTMPHQGQDGRRAERIARFAAQAGVPLIATNDVLYHHPDRRPLQDVLTATRHHTTVFAAGRLLEKNAERHLKPPHEMVRLFRDYPEAIAATADFVAPITFQLDELKYAYPDEPIPPGKTAQQHLYDLVWEGAARHYGADMIPPKVQGLINKELALIARLEYEPYFLTVYDIVTHAREKGILCQGRGSAANSVVCFCLGITGVNPTQVDLLFERFISAERKEPPDIDVDFEHERREEVMQYVYDRYSRDRAAIVATVISYRSRSAIRDVGKALGLSEDVTAALANTVWGLSGGGIDRQHIRQAGLDPDNPIIQRAVELAITLIGFPRHLSQHVGGFVLTRDRLDETVPIGPAAMDKRSFIEWDKDDIDEVGLMKVDVLSLGMLTCIRKAFDLIHQHKPQLYGGEKLTLASLPRKDKAVYDMLCKGDSLGVFQVESRAQMNMLPRLRPQEFYDLVIEVAIVRPGPIQGDMVHPYLRRRSGQEPCTLPSPSPQHGPANELQQILGKTKGVPLFQEQAMRIAMEAAKFTPEEANQLRRAMATFRKMGTIHTMEKKMIDGMVNRGYDRTFAENCFNQIKGFGEYGFPESHAASFAHLVYISAWLKCHHPEVFAAALLNSQPMGFYAPAQIVRDAREHGVTVLPVDVNFSQWDNILEETPDVHLALRLGFRQIDGFSKRDTELLIADRQEPYRTIEDMHRRLRLDRRAFTLLADADAFGSLDIDRRAALWAVRRLPNDETLLLFRAAAASELAQEPRTKLPEMAASEHVIADYETTRLSLKGHPLQYLREGLAAEGVSTCRAVQEGADGRRMKVAGVVTVRQRPGSAKGVVFLTIEDETGIANIVIWPKIMKVFRREVMSARLIHIEGRIQRSLEGVVHLVAAKLQDRSAALIEMSGREAQRLIAPSQMAHHPRNVRVMPNSRDFH.

It belongs to the DNA polymerase type-C family. DnaE2 subfamily.

It localises to the cytoplasm. The catalysed reaction is DNA(n) + a 2'-deoxyribonucleoside 5'-triphosphate = DNA(n+1) + diphosphate. Its function is as follows. DNA polymerase involved in damage-induced mutagenesis and translesion synthesis (TLS). It is not the major replicative DNA polymerase. The protein is Error-prone DNA polymerase of Brucella melitensis biotype 1 (strain ATCC 23456 / CCUG 17765 / NCTC 10094 / 16M).